The chain runs to 206 residues: Small ribosomal subunit protein uS4 (206 aa).

The S4 RNA-binding domain occupies 96-156 (QRLDNVVYRM…EKSKTQARII (61 aa)).

This sequence belongs to the universal ribosomal protein uS4 family. Part of the 30S ribosomal subunit. Contacts protein S5. The interaction surface between S4 and S5 is involved in control of translational fidelity.

One of the primary rRNA binding proteins, it binds directly to 16S rRNA where it nucleates assembly of the body of the 30S subunit. Functionally, with S5 and S12 plays an important role in translational accuracy. The sequence is that of Small ribosomal subunit protein uS4 from Pseudoalteromonas translucida (strain TAC 125).